Here is a 759-residue protein sequence, read N- to C-terminus: Olfactomedin-like protein 2B (759 aa).

An N-terminal signal peptide occupies residues 1-20 (MAKSLLLVLCFALVTTLGWG). 2 coiled-coil regions span residues 40–68 (TEDETLQNEADNQENVLSQLLGDYDKVKA) and 179–209 (KLEEEISKNLTKENEQIREDVEEIRTEMNKR). 2 N-linked (GlcNAc...) asparagine glycosylation sites follow: N187 and N213. Disordered regions lie at residues 346 to 396 (TRRP…VSAS) and 456 to 494 (THTAPVPPPPVRTDSPGKDSTARQGTVPPGPTLSPEEED). A compositionally biased stretch (low complexity) spans 356 to 396 (AAVTADAGTTSAGTPTTALPSARLPASTAAPSTPDPAVSAS). Residues 502–759 (RCKDTLSTIT…QVTYHVIFAY (258 aa)) form the Olfactomedin-like domain. C503 and C689 are oxidised to a cystine. N704 carries an N-linked (GlcNAc...) asparagine glycan.

In terms of assembly, homodimer. Binds to heparin and chondroitin sulfate E. Post-translationally, O-glycosylated and N-glycosylated.

It localises to the secreted. This chain is Olfactomedin-like protein 2B (OLFML2B), found in Bos taurus (Bovine).